Consider the following 745-residue polypeptide: Mitogen-activated protein kinase kinase kinase zak-1 (745 aa).

Residues 31–305 (IQVGDHIGVG…KVMDECEKFM (275 aa)) enclose the Protein kinase domain. Residues 37–45 (IGVGTFGAV) and Lys-63 contribute to the ATP site. Residue Asp-159 is the Proton acceptor of the active site. Residues 307-352 (LEDWKTEIEKQEKNVEKMRKDLEKRREQLEIREKALKQRMKVEQAV) adopt a coiled-coil conformation. In terms of domain architecture, SAM spans 366-438 (WSEHHTSHWV…MKMIRKLADT (73 aa)). The disordered stretch occupies residues 693-745 (LTRRRRTTTTNSEDTEKSDTNNKTPESQARRVHVHGGKDKWNWKKGKSRPKFT). Over residues 735–745 (WKKGKSRPKFT) the composition is skewed to basic residues.

Belongs to the protein kinase superfamily. STE Ser/Thr protein kinase family. MAP kinase kinase kinase subfamily. The cofactor is Mg(2+). In terms of tissue distribution, widely expressed; expressed in most tissues, including intestines, muscle and the nervous system.

The protein localises to the cytoplasm. Its subcellular location is the nucleus. The catalysed reaction is L-seryl-[protein] + ATP = O-phospho-L-seryl-[protein] + ADP + H(+). It carries out the reaction L-threonyl-[protein] + ATP = O-phospho-L-threonyl-[protein] + ADP + H(+). Functionally, stress-activated component of a protein kinase signal transduction cascade that promotes programmed cell death in response to ribotoxic stress. Acts as the proximal sensor of ribotoxic stress: directly binds to the ribosome, thereby acting as a sentinel for colliding ribosomes. Upon ribosome collisions, activates the stress-activated protein kinase signal transduction cascade, leading to programmed cell death. Acts by catalyzing phosphorylation of MAP kinase kinases, leading to activation of the JNK and MAP kinase p38 pathways. The polypeptide is Mitogen-activated protein kinase kinase kinase zak-1 (Caenorhabditis elegans).